The following is a 159-amino-acid chain: 2-C-methyl-D-erythritol 2,4-cyclodiphosphate synthase (159 aa).

Residues aspartate 9 and histidine 11 each contribute to the a divalent metal cation site. Residues 9-11 (DVH) and 35-36 (HS) each bind 4-CDP-2-C-methyl-D-erythritol 2-phosphate. An a divalent metal cation-binding site is contributed by histidine 43. 4-CDP-2-C-methyl-D-erythritol 2-phosphate is bound by residues 57–59 (DIG), 62–66 (FPDTD), 133–136 (TTTE), phenylalanine 140, and arginine 143.

Belongs to the IspF family. In terms of assembly, homotrimer. The cofactor is a divalent metal cation.

It carries out the reaction 4-CDP-2-C-methyl-D-erythritol 2-phosphate = 2-C-methyl-D-erythritol 2,4-cyclic diphosphate + CMP. Its pathway is isoprenoid biosynthesis; isopentenyl diphosphate biosynthesis via DXP pathway; isopentenyl diphosphate from 1-deoxy-D-xylulose 5-phosphate: step 4/6. Involved in the biosynthesis of isopentenyl diphosphate (IPP) and dimethylallyl diphosphate (DMAPP), two major building blocks of isoprenoid compounds. Catalyzes the conversion of 4-diphosphocytidyl-2-C-methyl-D-erythritol 2-phosphate (CDP-ME2P) to 2-C-methyl-D-erythritol 2,4-cyclodiphosphate (ME-CPP) with a corresponding release of cytidine 5-monophosphate (CMP). The chain is 2-C-methyl-D-erythritol 2,4-cyclodiphosphate synthase from Mannheimia succiniciproducens (strain KCTC 0769BP / MBEL55E).